Reading from the N-terminus, the 89-residue chain is Small ribosomal subunit protein uS15 (89 aa).

The span at 1–10 (MSITAERKAE) shows a compositional bias: basic and acidic residues. Residues 1–24 (MSITAERKAEVIQGNANKAGDTGS) are disordered.

Belongs to the universal ribosomal protein uS15 family. As to quaternary structure, part of the 30S ribosomal subunit. Forms a bridge to the 50S subunit in the 70S ribosome, contacting the 23S rRNA.

Functionally, one of the primary rRNA binding proteins, it binds directly to 16S rRNA where it helps nucleate assembly of the platform of the 30S subunit by binding and bridging several RNA helices of the 16S rRNA. Forms an intersubunit bridge (bridge B4) with the 23S rRNA of the 50S subunit in the ribosome. This Rhodopseudomonas palustris (strain BisB5) protein is Small ribosomal subunit protein uS15.